The chain runs to 183 residues: uncharacterized protein (183 aa).

Positions 1–29 (MQCWQQPFLRFLQQPFFLATASLAGSSSS) are cleaved as a signal peptide. Residues 149–183 (PGSTCDGSLKGRAYPSCVPKRDPEHSREESHPLSG) form a disordered region. Residues 167-183 (PKRDPEHSREESHPLSG) show a composition bias toward basic and acidic residues.

The protein resides in the secreted. This is an uncharacterized protein from Homo sapiens (Human).